A 358-amino-acid chain; its full sequence is Fructose-bisphosphate aldolase class 2 (358 aa).

Ser-61 contributes to the D-glyceraldehyde 3-phosphate binding site. The Proton donor role is filled by Asp-109. Residues His-110, Asp-144, Glu-174, and His-226 each coordinate Zn(2+). Gly-227 provides a ligand contact to dihydroxyacetone phosphate. His-264 provides a ligand contact to Zn(2+). Residues 265-267 (GGS) and 286-289 (NIDT) each bind dihydroxyacetone phosphate.

The protein belongs to the class II fructose-bisphosphate aldolase family. It depends on Zn(2+) as a cofactor.

The enzyme catalyses beta-D-fructose 1,6-bisphosphate = D-glyceraldehyde 3-phosphate + dihydroxyacetone phosphate. It participates in carbohydrate degradation; glycolysis; D-glyceraldehyde 3-phosphate and glycerone phosphate from D-glucose: step 4/4. Catalyzes the aldol condensation of dihydroxyacetone phosphate (DHAP or glycerone-phosphate) with glyceraldehyde 3-phosphate (G3P) to form fructose 1,6-bisphosphate (FBP) in gluconeogenesis and the reverse reaction in glycolysis. The polypeptide is Fructose-bisphosphate aldolase class 2 (fbaA) (Buchnera aphidicola subsp. Acyrthosiphon pisum (strain APS) (Acyrthosiphon pisum symbiotic bacterium)).